A 115-amino-acid polypeptide reads, in one-letter code: Mitochondrial zinc maintenance protein 1, mitochondrial (115 aa).

The transit peptide at 1 to 23 directs the protein to the mitochondrion; that stretch reads MTTSTAAAAKSAYRQLLRSTRVV.

The protein belongs to the complex I LYR family. MZM1 subfamily. Interacts with RIP1.

It localises to the mitochondrion matrix. Functionally, assembly factor required for Rieske Fe-S protein RIP1 incorporation into the cytochrome b-c1 (CIII) complex. Functions as a chaperone, binding to this subunit within the mitochondrial matrix and stabilizing it prior to its translocation and insertion into the late CIII dimeric intermediate within the mitochondrial inner membrane. Modulates the mitochondrial matrix zinc pool. The sequence is that of Mitochondrial zinc maintenance protein 1, mitochondrial (MZM1) from Penicillium rubens (strain ATCC 28089 / DSM 1075 / NRRL 1951 / Wisconsin 54-1255) (Penicillium chrysogenum).